The chain runs to 483 residues: Regulatory protein ViaA (483 aa).

The protein belongs to the ViaA family. Homodimer. Interacts with RavA.

It localises to the cytoplasm. Component of the RavA-ViaA chaperone complex, which may act on the membrane to optimize the function of some of the respiratory chains. ViaA stimulates the ATPase activity of RavA. The polypeptide is Regulatory protein ViaA (Salmonella arizonae (strain ATCC BAA-731 / CDC346-86 / RSK2980)).